A 908-amino-acid polypeptide reads, in one-letter code: Autophagy-related protein 9 (908 aa).

The Cytoplasmic segment spans residues M1 to R216. Positions S64 to H162 are disordered. A helical membrane pass occupies residues V217 to V237. At D238 to N259 the chain is on the lumenal side. Residue N259 is glycosylated (N-linked (GlcNAc...) asparagine). The chain crosses the membrane as a helical span at residues M260 to I280. Over Q281–R433 the chain is Cytoplasmic. Residues F434–I454 lie within the membrane without spanning it. Residues V455–S525 lie on the Cytoplasmic side of the membrane. Residues F526–F546 form a helical membrane-spanning segment. Residues L547–R555 lie on the Lumenal side of the membrane. A helical membrane pass occupies residues T556–S576. Topologically, residues E577–K622 are cytoplasmic. The stretch at L623–S643 is an intramembrane region. The Cytoplasmic segment spans residues L644–R908. Disordered stretches follow at residues A751–A779 and Q809–V878. Positions G813–S825 are enriched in gly residues. A compositionally biased stretch (basic and acidic residues) spans Q839–L852.

This sequence belongs to the ATG9 family. Homotrimer; forms a homotrimer with a central pore that forms a path between the two membrane leaflets. Phosphorylated by apg-1. Apg-1 phosphorylation is required for preautophagosome elongation.

The protein localises to the preautophagosomal structure membrane. Its subcellular location is the cytoplasmic vesicle membrane. The protein resides in the golgi apparatus membrane. It localises to the endoplasmic reticulum membrane. It catalyses the reaction a 1,2-diacyl-sn-glycero-3-phosphocholine(in) = a 1,2-diacyl-sn-glycero-3-phosphocholine(out). The enzyme catalyses a 1,2-diacyl-sn-glycero-3-phospho-L-serine(in) = a 1,2-diacyl-sn-glycero-3-phospho-L-serine(out). The catalysed reaction is a 1,2-diacyl-sn-glycero-3-phosphoethanolamine(in) = a 1,2-diacyl-sn-glycero-3-phosphoethanolamine(out). It carries out the reaction a 1,2-diacyl-sn-glycero-3-phospho-(1D-myo-inositol-3-phosphate)(in) = a 1,2-diacyl-sn-glycero-3-phospho-(1D-myo-inositol-3-phosphate)(out). Functionally, phospholipid scramblase involved in autophagy and cytoplasm to vacuole transport (Cvt) vesicle formation. Cycles between the preautophagosomal structure/phagophore assembly site (PAS) and the cytoplasmic vesicle pool and supplies membrane for the growing autophagosome. Lipid scramblase activity plays a key role in preautophagosomal structure/phagophore assembly by distributing the phospholipids that arrive through atg-2 from the cytoplasmic to the luminal leaflet of the bilayer, thereby driving autophagosomal membrane expansion. Required for mitophagy. Also involved in endoplasmic reticulum-specific autophagic process and is essential for the survival of cells subjected to severe ER stress. Different machineries are required for anterograde trafficking to the PAS during either the Cvt pathway or bulk autophagy and for retrograde trafficking. The sequence is that of Autophagy-related protein 9 (apg-7) from Neurospora crassa (strain ATCC 24698 / 74-OR23-1A / CBS 708.71 / DSM 1257 / FGSC 987).